A 414-amino-acid chain; its full sequence is Gamma-glutamyl phosphate reductase (414 aa).

This sequence belongs to the gamma-glutamyl phosphate reductase family.

The protein localises to the cytoplasm. It carries out the reaction L-glutamate 5-semialdehyde + phosphate + NADP(+) = L-glutamyl 5-phosphate + NADPH + H(+). Its pathway is amino-acid biosynthesis; L-proline biosynthesis; L-glutamate 5-semialdehyde from L-glutamate: step 2/2. Catalyzes the NADPH-dependent reduction of L-glutamate 5-phosphate into L-glutamate 5-semialdehyde and phosphate. The product spontaneously undergoes cyclization to form 1-pyrroline-5-carboxylate. The sequence is that of Gamma-glutamyl phosphate reductase from Thermoanaerobacter pseudethanolicus (strain ATCC 33223 / 39E) (Clostridium thermohydrosulfuricum).